The chain runs to 114 residues: Ribonuclease P protein component (114 aa).

Belongs to the RnpA family. Consists of a catalytic RNA component (M1 or rnpB) and a protein subunit.

The catalysed reaction is Endonucleolytic cleavage of RNA, removing 5'-extranucleotides from tRNA precursor.. RNaseP catalyzes the removal of the 5'-leader sequence from pre-tRNA to produce the mature 5'-terminus. It can also cleave other RNA substrates such as 4.5S RNA. The protein component plays an auxiliary but essential role in vivo by binding to the 5'-leader sequence and broadening the substrate specificity of the ribozyme. The chain is Ribonuclease P protein component from Legionella pneumophila (strain Lens).